The following is a 172-amino-acid chain: uncharacterized protein (172 aa).

This is an uncharacterized protein from Treponema pallidum (strain Nichols).